A 160-amino-acid polypeptide reads, in one-letter code: Large ribosomal subunit protein uL22c (160 aa).

Belongs to the universal ribosomal protein uL22 family. Part of the 50S ribosomal subunit.

The protein localises to the plastid. It is found in the chloroplast. In terms of biological role, this protein binds specifically to 23S rRNA. The globular domain of the protein is located near the polypeptide exit tunnel on the outside of the subunit, while an extended beta-hairpin is found that lines the wall of the exit tunnel in the center of the 70S ribosome. In Arabidopsis thaliana (Mouse-ear cress), this protein is Large ribosomal subunit protein uL22c (rpl22).